The sequence spans 1319 residues: DNA-directed RNA polymerase subunit beta' (1319 aa).

Positions 60, 62, 75, and 78 each coordinate Zn(2+). Residues Asp535, Asp537, and Asp539 each contribute to the Mg(2+) site. Cys890, Cys971, Cys978, and Cys981 together coordinate Zn(2+).

Belongs to the RNA polymerase beta' chain family. In terms of assembly, the RNAP catalytic core consists of 2 alpha, 1 beta, 1 beta' and 1 omega subunit. When a sigma factor is associated with the core the holoenzyme is formed, which can initiate transcription. Requires Mg(2+) as cofactor. Zn(2+) serves as cofactor.

It carries out the reaction RNA(n) + a ribonucleoside 5'-triphosphate = RNA(n+1) + diphosphate. DNA-dependent RNA polymerase catalyzes the transcription of DNA into RNA using the four ribonucleoside triphosphates as substrates. This is DNA-directed RNA polymerase subunit beta' from Mycobacteroides abscessus (strain ATCC 19977 / DSM 44196 / CCUG 20993 / CIP 104536 / JCM 13569 / NCTC 13031 / TMC 1543 / L948) (Mycobacterium abscessus).